Reading from the N-terminus, the 301-residue chain is Protoheme IX farnesyltransferase (301 aa).

Transmembrane regions (helical) follow at residues 20-42, 55-75, 105-125, 126-146, 150-172, 176-198, 227-247, 249-269, and 280-300; these read FTEL…GMWL, VDVI…SGAF, ALMV…MTTW, QAGV…SLYA, LVSN…WFAV, FSIV…FYAI, MFFW…LGIV, VVLA…GFKM, and FVYS…ISIF.

The protein belongs to the UbiA prenyltransferase family. Protoheme IX farnesyltransferase subfamily. In terms of assembly, interacts with CtaA.

It localises to the cell membrane. The catalysed reaction is heme b + (2E,6E)-farnesyl diphosphate + H2O = Fe(II)-heme o + diphosphate. It participates in porphyrin-containing compound metabolism; heme O biosynthesis; heme O from protoheme: step 1/1. Functionally, converts heme B (protoheme IX) to heme O by substitution of the vinyl group on carbon 2 of heme B porphyrin ring with a hydroxyethyl farnesyl side group. This is Protoheme IX farnesyltransferase from Listeria monocytogenes serotype 4b (strain CLIP80459).